A 430-amino-acid polypeptide reads, in one-letter code: 26S protease regulatory subunit 6A (430 aa).

218–225 (GPPGTGKT) contributes to the ATP binding site.

It belongs to the AAA ATPase family. As to quaternary structure, component of the 19S proteasome regulatory particle complex. The 26S proteasome consists of a 20S core particle (CP) and two 19S regulatory subunits (RP). The regulatory particle is made of a lid composed of 9 subunits, a base containing 6 ATPases including the PSMC3 homolog rpt-5 and few additional components.

It localises to the cytoplasm. The protein resides in the nucleus. Component of the 26S proteasome, a multiprotein complex involved in the ATP-dependent degradation of ubiquitinated proteins. This complex plays a key role in the maintenance of protein homeostasis by removing misfolded or damaged proteins, which could impair cellular functions, and by removing proteins whose functions are no longer required. Therefore, the proteasome participates in numerous cellular processes, including cell cycle progression, apoptosis, or DNA damage repair. Belongs to the heterohexameric ring of AAA (ATPases associated with diverse cellular activities) proteins that unfolds ubiquitinated target proteins that are concurrently translocated into a proteolytic chamber and degraded into peptides. This is 26S protease regulatory subunit 6A from Caenorhabditis elegans.